The sequence spans 361 residues: Methyltransferase LUC1 (361 aa).

S-adenosyl-L-homocysteine-binding residues include tyrosine 18, asparagine 66, aspartate 89, serine 126, and phenylalanine 127. Positions 156 and 233 each coordinate Mg(2+).

The protein belongs to the methyltransferase superfamily. Type-7 methyltransferase family. Mg(2+) serves as cofactor.

The protein operates within mycotoxin biosynthesis. In terms of biological role, methyltransferase; part of the gene cluster that mediates the biosynthesis of the mycotoxin lucilactaene and the lucilactaene-related compound NG-391 that act as cell cycle inhibitors with potent growth inhibitory activity against malarial parasites, moderate growth inhibitory activity against cancer cells, and no activity against bacteria and fungi. LUC1 performs the last step of the pathway and methylates the hydroxyl group of demethyllucilactaene at C-21 to yeald lucilactaene. The pathway begins with the hybrid PKS-NRPS synthetase LUC5 which is responsible for the condensation of one acetyl-coenzyme A (CoA) unit with six malonyl-CoA units and the amide linkage of the arising heptaketide and homoserine, subsequently releasing the first intermediate prelucilactaene B. Both the cytochrome P450 monooxygenase LUC2 and the hydrolase LUC6 function in parallel in modification of prelucilactaene B. LUC6 may catalyze the 2-pyrrolidone ring formation to form prelucilactaene C from prelucilactaene B, followed by C-15 hydroxylation by the same enzyme to give prelucilactaene D, which is then converted to prelucilactaene E by epoxidation, and finally to prelucilactaene F by cyclization. Prelucilactane D, prelucilactaene E, and prelucilactaene F can be converted to dihydrolucilactaene, NG391, and lucilactaene, respectively, via C-20 methyl group hydroxylation by the cytochrome P450 monooxygenase LUC2. However, LUC2, unlike FUS8 in fusarin C biosynthesis, is not enough for the full oxidation of the C-20 methyl group into carboxylic acid, which is a prerequisite for the final methylation step. The aldehyde dehydrogenase LUC3 is involved in the biosynthesis by further oxidation of the C-20 alcoholic analog prelucilactaene G into a carboxylic derivative. This unidentified carboxylic derivative may be converted to demethyllucilactaene. As the last step, the methyltransferase LUC1 methylates the hydroxyl group at C-21 of demethyllucilactaene to generate lucilactaene. The protein is Methyltransferase LUC1 of Fusarium sp.